The following is a 230-amino-acid chain: Urease accessory protein UreF (230 aa).

The protein belongs to the UreF family. UreD, UreF and UreG form a complex that acts as a GTP-hydrolysis-dependent molecular chaperone, activating the urease apoprotein by helping to assemble the nickel containing metallocenter of UreC. The UreE protein probably delivers the nickel.

The protein resides in the cytoplasm. Functionally, required for maturation of urease via the functional incorporation of the urease nickel metallocenter. The sequence is that of Urease accessory protein UreF from Cupriavidus necator (strain ATCC 17699 / DSM 428 / KCTC 22496 / NCIMB 10442 / H16 / Stanier 337) (Ralstonia eutropha).